The following is a 287-amino-acid chain: Protoheme IX farnesyltransferase (287 aa).

The next 8 membrane-spanning stretches (helical) occupy residues 9–29, 31–51, 94–114, 132–152, 158–178, 202–222, 228–248, and 267–287; these read IVTM…SATL, LIDW…AGAA, IILW…TWLI, VGAI…GGTL, WMLF…IAWL, AWQS…LAWF, VASA…WPLL, and LRWS…RASL.

Belongs to the UbiA prenyltransferase family. Protoheme IX farnesyltransferase subfamily.

The protein resides in the cell inner membrane. It carries out the reaction heme b + (2E,6E)-farnesyl diphosphate + H2O = Fe(II)-heme o + diphosphate. It participates in porphyrin-containing compound metabolism; heme O biosynthesis; heme O from protoheme: step 1/1. Its function is as follows. Converts heme B (protoheme IX) to heme O by substitution of the vinyl group on carbon 2 of heme B porphyrin ring with a hydroxyethyl farnesyl side group. This is Protoheme IX farnesyltransferase from Rhodopirellula baltica (strain DSM 10527 / NCIMB 13988 / SH1).